A 1117-amino-acid chain; its full sequence is RNA-directed RNA polymerase (1117 aa).

Residues 1–17 (MTVSGRSSWQNGKTTNA) show a composition bias toward polar residues. Residues 1–23 (MTVSGRSSWQNGKTTNAMRAGKL) form a disordered region.

It catalyses the reaction RNA(n) + a ribonucleoside 5'-triphosphate = RNA(n+1) + diphosphate. Its function is as follows. RNA-dependent RNA polymerase which replicates the viral genome. The sequence is that of RNA-directed RNA polymerase (p1) from Penicillium chrysogenum (Penicillium notatum).